Reading from the N-terminus, the 403-residue chain is S-adenosylmethionine synthase (403 aa).

Residue His16 participates in ATP binding. Asp18 is a Mg(2+) binding site. Glu44 is a binding site for K(+). The L-methionine site is built by Glu57 and Gln100. The segment at 100 to 110 (QSSDIAQGVDR) is flexible loop. ATP contacts are provided by residues 165 to 167 (DAK), Asp242, 248 to 249 (RK), Ala265, and Lys269. Position 242 (Asp242) interacts with L-methionine. Lys273 is an L-methionine binding site.

The protein belongs to the AdoMet synthase family. In terms of assembly, homotetramer; dimer of dimers. It depends on Mg(2+) as a cofactor. The cofactor is K(+).

It localises to the cytoplasm. The catalysed reaction is L-methionine + ATP + H2O = S-adenosyl-L-methionine + phosphate + diphosphate. The protein operates within amino-acid biosynthesis; S-adenosyl-L-methionine biosynthesis; S-adenosyl-L-methionine from L-methionine: step 1/1. In terms of biological role, catalyzes the formation of S-adenosylmethionine (AdoMet) from methionine and ATP. The overall synthetic reaction is composed of two sequential steps, AdoMet formation and the subsequent tripolyphosphate hydrolysis which occurs prior to release of AdoMet from the enzyme. The polypeptide is S-adenosylmethionine synthase (Nitrosococcus oceani (strain ATCC 19707 / BCRC 17464 / JCM 30415 / NCIMB 11848 / C-107)).